Here is a 297-residue protein sequence, read N- to C-terminus: Transmembrane protein 169 (297 aa).

A disordered region spans residues 1-84 (MEEPALVEGQ…PKEEEGDDFI (84 aa)). At 1 to 159 (MEEPALVEGQ…CQLGADRGPH (159 aa)) the chain is on the extracellular side. The span at 9-18 (GQSQLPSPHH) shows a compositional bias: polar residues. The segment covering 60–84 (ETLDEEPGESEGGDQPKEEEGDDFI) has biased composition (acidic residues). A helical transmembrane segment spans residues 160-180 (VVLWTLVCLPVVFLLSFVVSF). The Cytoplasmic segment spans residues 181–210 (YYGTITWYNIFLVYNEERTFWHKISCCPCL). The chain crosses the membrane as a helical span at residues 211–231 (ILCYPVLIMAMASSLGLYAAV). Residues 232–297 (VQLSWSWEAW…ATQEIETSAV (66 aa)) are Extracellular-facing.

Its subcellular location is the membrane. In Bos taurus (Bovine), this protein is Transmembrane protein 169 (TMEM169).